A 184-amino-acid polypeptide reads, in one-letter code: Putative DNA-directed RNA polymerase subunit 454R (184 aa).

Belongs to the archaeal Rpo5/eukaryotic RPB5 RNA polymerase subunit family.

Component of the DNA-dependent RNA polymerase that catalyzes the transcription in the cytoplasm of viral DNA into RNA using the four ribonucleoside triphosphates as substrates. The chain is Putative DNA-directed RNA polymerase subunit 454R from Invertebrate iridescent virus 6 (IIV-6).